Here is a 293-residue protein sequence, read N- to C-terminus: MDDSVNTRYPILLVHGLFGFDRIGSHHYFHGIKQALNECGASVFVPIISAANDNEARGDQLLKQIHNLRRQVGAQRVNLIGHSQGALTARYVAAIAPELIASVTSVSGPNHGSELADRLRLAFVPGRLGETVAAALTTSFSAFLSALSGHPRLPQNALNALNALTTDGVAAFNRQYPQGLPDRWGGMGPAQVNAVHYYSWSGIIKGSRLAESLNLLDPLHNALRVFDSFFTRETRENDGMVGRFSSHLGQVIRSDYPLDHLDTINHMARGSRRRINPVELYIEHAKRLKEAGL.

The AB hydrolase-1 domain occupies Pro10–Gly206. Leu17 serves as a coordination point for substrate. Ser83 serves as the catalytic Nucleophile. Position 84 (Gln84) interacts with substrate. Asp217 serves as a coordination point for Ca(2+). Active-site charge relay system residues include Asp238 and His260. Ca(2+)-binding residues include Asp262, His266, and Arg269.

It belongs to the AB hydrolase superfamily. Pseudomonas lipase family. Ca(2+) is required as a cofactor.

The protein resides in the secreted. The enzyme catalyses a triacylglycerol + H2O = a diacylglycerol + a fatty acid + H(+). Its function is as follows. Catalyzes the hydrolysis of triacylglycerols, with the highest activity with tributyrin (C4), lower activity with tricaprylin (C8), and much lower activity with triacetin (C2), trilaurin (C12) and triolein (C18). This Pseudomonas fragi protein is Triacylglycerol lipase (lips).